The sequence spans 149 residues: MSTNICSFKDRCVSILCCKFCKQVLSSRGMKAVLLADTEIDLFSTDIPPTNAVDFTGRCYFTKICKCKLKDIACLKCGNIVGYHVIVPCSSCLPSCNNGHFWMFHSQAVYDINRLDSTGVNILLWGNLPEIEESTDEDVLNISAEECIR.

Belongs to the FAM72 family.

The chain is Protein FAM72B (FAM72B) from Homo sapiens (Human).